We begin with the raw amino-acid sequence, 206 residues long: Ribosomal RNA small subunit methyltransferase G (206 aa).

Residues glycine 73, leucine 78, 124-125 (VE), and arginine 139 each bind S-adenosyl-L-methionine.

Belongs to the methyltransferase superfamily. RNA methyltransferase RsmG family.

The protein resides in the cytoplasm. It catalyses the reaction guanosine(527) in 16S rRNA + S-adenosyl-L-methionine = N(7)-methylguanosine(527) in 16S rRNA + S-adenosyl-L-homocysteine. Functionally, specifically methylates the N7 position of guanine in position 527 of 16S rRNA. This Sodalis glossinidius (strain morsitans) protein is Ribosomal RNA small subunit methyltransferase G.